The following is a 77-amino-acid chain: Translational regulator CsrA (77 aa).

The segment at 58–77 (ANRRTAEETLDQASRLLSQK) is disordered. Positions 68–77 (DQASRLLSQK) are enriched in polar residues.

This sequence belongs to the CsrA/RsmA family. As to quaternary structure, homodimer; the beta-strands of each monomer intercalate to form a hydrophobic core, while the alpha-helices form wings that extend away from the core.

The protein localises to the cytoplasm. A translational regulator that binds mRNA to regulate translation initiation and/or mRNA stability. Usually binds in the 5'-UTR at or near the Shine-Dalgarno sequence preventing ribosome-binding, thus repressing translation. Its main target seems to be the major flagellin gene, while its function is anatagonized by FliW. This Magnetococcus marinus (strain ATCC BAA-1437 / JCM 17883 / MC-1) protein is Translational regulator CsrA.